A 548-amino-acid chain; its full sequence is Glucose-6-phosphate isomerase (548 aa).

E355 (proton donor) is an active-site residue. Active-site residues include H386 and K514.

The protein belongs to the GPI family.

The protein localises to the cytoplasm. It carries out the reaction alpha-D-glucose 6-phosphate = beta-D-fructose 6-phosphate. It functions in the pathway carbohydrate biosynthesis; gluconeogenesis. It participates in carbohydrate degradation; glycolysis; D-glyceraldehyde 3-phosphate and glycerone phosphate from D-glucose: step 2/4. Its function is as follows. Catalyzes the reversible isomerization of glucose-6-phosphate to fructose-6-phosphate. The sequence is that of Glucose-6-phosphate isomerase from Yersinia pestis (strain Pestoides F).